The chain runs to 318 residues: MITLFQCLYLILFSFICYQGAAAFSHSTAASWLAAALGAAAAGLYIWNTKRVWKHCSSGLCAWIAVIQVMSVGVVLIGTDIMPVLCVIAIFAGCEGLRIGQSALQARLSDQIDKLTQAEQHANQMLIDVRSRNHDTMKHITAIKSAQPKADTQAYIQNWADQYSQYDRFLKGENAYVAGVLYDFLEKARASNVSVSLHMHTPLSSLPFSPADQVSLVGNILENALDSAAEAREKAEIKLETSLRSGLYVLTCENSTPGMDPKVLDTIYQSFGRSTKNGAHEGMGTYIIQKLVKGAFGRLDFTYRHPIFRLEIKIPFQK.

3 consecutive transmembrane segments (helical) span residues 4-24 (LFQCLYLILFSFICYQGAAAF), 27-47 (STAASWLAAALGAAAAGLYIW), and 72-82 (VGVVLIGTDIM). Positions 132-318 (RNHDTMKHIT…RLEIKIPFQK (187 aa)) constitute a Histidine kinase domain. His134 bears the Phosphohistidine; by autocatalysis mark.

Its subcellular location is the cell membrane. It catalyses the reaction ATP + protein L-histidine = ADP + protein N-phospho-L-histidine.. Member of the two-component regulatory system NatK/NatR that positively regulates the expression of the natAB operon. Potentially phosphorylates NatR. The sequence is that of Sensor histidine kinase NatK from Bacillus subtilis (strain 168).